A 690-amino-acid chain; its full sequence is Elongation factor G (690 aa).

Residues 8–283 (EDYRNFGIMA…AVVDYLPSPI (276 aa)) form the tr-type G domain. GTP is bound by residues 17–24 (AHIDAGKT), 81–85 (DTPGH), and 135–138 (NKMD).

It belongs to the TRAFAC class translation factor GTPase superfamily. Classic translation factor GTPase family. EF-G/EF-2 subfamily.

The protein localises to the cytoplasm. Functionally, catalyzes the GTP-dependent ribosomal translocation step during translation elongation. During this step, the ribosome changes from the pre-translocational (PRE) to the post-translocational (POST) state as the newly formed A-site-bound peptidyl-tRNA and P-site-bound deacylated tRNA move to the P and E sites, respectively. Catalyzes the coordinated movement of the two tRNA molecules, the mRNA and conformational changes in the ribosome. In Bradyrhizobium diazoefficiens (strain JCM 10833 / BCRC 13528 / IAM 13628 / NBRC 14792 / USDA 110), this protein is Elongation factor G.